A 357-amino-acid polypeptide reads, in one-letter code: UDP-N-acetylglucosamine--N-acetylmuramyl-(pentapeptide) pyrophosphoryl-undecaprenol N-acetylglucosamine transferase (357 aa).

UDP-N-acetyl-alpha-D-glucosamine contacts are provided by residues 12-14 (TGG), Asn-124, Arg-162, Ser-190, Ile-244, 263-268 (ALTVAE), and Gln-289.

This sequence belongs to the glycosyltransferase 28 family. MurG subfamily.

It is found in the cell inner membrane. The catalysed reaction is di-trans,octa-cis-undecaprenyl diphospho-N-acetyl-alpha-D-muramoyl-L-alanyl-D-glutamyl-meso-2,6-diaminopimeloyl-D-alanyl-D-alanine + UDP-N-acetyl-alpha-D-glucosamine = di-trans,octa-cis-undecaprenyl diphospho-[N-acetyl-alpha-D-glucosaminyl-(1-&gt;4)]-N-acetyl-alpha-D-muramoyl-L-alanyl-D-glutamyl-meso-2,6-diaminopimeloyl-D-alanyl-D-alanine + UDP + H(+). It participates in cell wall biogenesis; peptidoglycan biosynthesis. In terms of biological role, cell wall formation. Catalyzes the transfer of a GlcNAc subunit on undecaprenyl-pyrophosphoryl-MurNAc-pentapeptide (lipid intermediate I) to form undecaprenyl-pyrophosphoryl-MurNAc-(pentapeptide)GlcNAc (lipid intermediate II). This is UDP-N-acetylglucosamine--N-acetylmuramyl-(pentapeptide) pyrophosphoryl-undecaprenol N-acetylglucosamine transferase from Alkalilimnicola ehrlichii (strain ATCC BAA-1101 / DSM 17681 / MLHE-1).